A 200-amino-acid chain; its full sequence is Recombination protein RecR (200 aa).

The C4-type zinc-finger motif lies at 58-73 (CEVCHNLAEEGLCAIC). Positions 81 to 176 (GLICVVEEPV…DISRLAYGMP (96 aa)) constitute a Toprim domain.

The protein belongs to the RecR family.

In terms of biological role, may play a role in DNA repair. It seems to be involved in an RecBC-independent recombinational process of DNA repair. It may act with RecF and RecO. The protein is Recombination protein RecR of Magnetococcus marinus (strain ATCC BAA-1437 / JCM 17883 / MC-1).